The sequence spans 67 residues: Large ribosomal subunit protein uL29 (67 aa).

The protein belongs to the universal ribosomal protein uL29 family. As to quaternary structure, part of the 50S ribosomal subunit. Contacts protein L23 and trigger factor when it is complexed with the ribosome.

In terms of biological role, binds the 23S rRNA. One of the proteins that surrounds the polypeptide exit tunnel on the outside of the subunit. The polypeptide is Large ribosomal subunit protein uL29 (rpmC) (Deinococcus radiodurans (strain ATCC 13939 / DSM 20539 / JCM 16871 / CCUG 27074 / LMG 4051 / NBRC 15346 / NCIMB 9279 / VKM B-1422 / R1)).